Here is a 423-residue protein sequence, read N- to C-terminus: Glucose-1-phosphate adenylyltransferase (423 aa).

Alpha-D-glucose 1-phosphate contacts are provided by residues Tyr-108, Gly-173, 188–189, and Ser-207; that span reads EK.

This sequence belongs to the bacterial/plant glucose-1-phosphate adenylyltransferase family. Homotetramer.

It catalyses the reaction alpha-D-glucose 1-phosphate + ATP + H(+) = ADP-alpha-D-glucose + diphosphate. It participates in glycan biosynthesis; glycogen biosynthesis. Functionally, involved in the biosynthesis of ADP-glucose, a building block required for the elongation reactions to produce glycogen. Catalyzes the reaction between ATP and alpha-D-glucose 1-phosphate (G1P) to produce pyrophosphate and ADP-Glc. This chain is Glucose-1-phosphate adenylyltransferase, found in Francisella tularensis subsp. holarctica (strain FTNF002-00 / FTA).